The primary structure comprises 93 residues: Co-chaperonin GroES (93 aa).

This sequence belongs to the GroES chaperonin family. Heptamer of 7 subunits arranged in a ring. Interacts with the chaperonin GroEL.

The protein localises to the cytoplasm. Together with the chaperonin GroEL, plays an essential role in assisting protein folding. The GroEL-GroES system forms a nano-cage that allows encapsulation of the non-native substrate proteins and provides a physical environment optimized to promote and accelerate protein folding. GroES binds to the apical surface of the GroEL ring, thereby capping the opening of the GroEL channel. The chain is Co-chaperonin GroES from Streptococcus intermedius.